Consider the following 273-residue polypeptide: Large ribosomal subunit protein uL2 (273 aa).

A disordered region spans residues 223–273 (VVMNPVDHPMGGGEGRSSGGRHPCTPWGVPTKGHKTRSNKSTDKYIVKRRG). Residues 262 to 273 (KSTDKYIVKRRG) are compositionally biased toward basic and acidic residues.

This sequence belongs to the universal ribosomal protein uL2 family. Part of the 50S ribosomal subunit. Forms a bridge to the 30S subunit in the 70S ribosome.

In terms of biological role, one of the primary rRNA binding proteins. Required for association of the 30S and 50S subunits to form the 70S ribosome, for tRNA binding and peptide bond formation. It has been suggested to have peptidyltransferase activity; this is somewhat controversial. Makes several contacts with the 16S rRNA in the 70S ribosome. This Syntrophus aciditrophicus (strain SB) protein is Large ribosomal subunit protein uL2.